The sequence spans 245 residues: MTSTAITSSRAVTSSPVVVALDYDNRDKALAFVDRIDPRDCRLKVGKEMFTLLGPQFVRDLHQRGFEVFLDLKFHDIPNTTARAVAAAAELGVWMVNVHASGGARMMTAAREALLPFGKEAPLLIAVTVLTSMEASDLQDLGITLSPADYAAKLAALTQRCGLDGVVCSAQEAVRFKQEMGQAFKLVTPGIRPQGSEAGDQRRIMTPEQAQAAGVDYMVIGRPVTQSADPAATLRAINVSLSKEA.

Substrate is bound by residues Asp22, Lys44, 71 to 80, Thr131, Arg192, Gln201, Gly221, and Arg222; that span reads DLKFHDIPNT. Catalysis depends on Lys73, which acts as the Proton donor.

This sequence belongs to the OMP decarboxylase family. Type 1 subfamily. In terms of assembly, homodimer.

It carries out the reaction orotidine 5'-phosphate + H(+) = UMP + CO2. Its pathway is pyrimidine metabolism; UMP biosynthesis via de novo pathway; UMP from orotate: step 2/2. Catalyzes the decarboxylation of orotidine 5'-monophosphate (OMP) to uridine 5'-monophosphate (UMP). This is Orotidine 5'-phosphate decarboxylase from Klebsiella pneumoniae (strain 342).